A 130-amino-acid polypeptide reads, in one-letter code: Glycine cleavage system H protein (130 aa).

The 83-residue stretch at 25–107 (IATIGITEFA…YGEGWFLKVR (83 aa)) folds into the Lipoyl-binding domain. Lys66 bears the N6-lipoyllysine mark.

The protein belongs to the GcvH family. The glycine cleavage system is composed of four proteins: P, T, L and H. The cofactor is (R)-lipoate.

Its function is as follows. The glycine cleavage system catalyzes the degradation of glycine. The H protein shuttles the methylamine group of glycine from the P protein to the T protein. The chain is Glycine cleavage system H protein from Trichormus variabilis (strain ATCC 29413 / PCC 7937) (Anabaena variabilis).